Reading from the N-terminus, the 126-residue chain is Protein ApaG (126 aa).

The ApaG domain maps to 2 to 126 (SALDNSIRVE…FRLATPGLLH (125 aa)).

This Shewanella oneidensis (strain ATCC 700550 / JCM 31522 / CIP 106686 / LMG 19005 / NCIMB 14063 / MR-1) protein is Protein ApaG.